We begin with the raw amino-acid sequence, 388 residues long: Chorismate synthase (388 aa).

Residues Arg39 and Arg45 each contribute to the NADP(+) site. Residues Glu95 to Gly115 are disordered. Over residues Lys98 to Pro108 the composition is skewed to basic residues. FMN-binding positions include Arg130–Ser132, Asn251–Ala252, Gly296, Lys311–Thr315, and Arg337.

Belongs to the chorismate synthase family. In terms of assembly, homotetramer. It depends on FMNH2 as a cofactor.

The catalysed reaction is 5-O-(1-carboxyvinyl)-3-phosphoshikimate = chorismate + phosphate. It functions in the pathway metabolic intermediate biosynthesis; chorismate biosynthesis; chorismate from D-erythrose 4-phosphate and phosphoenolpyruvate: step 7/7. Its function is as follows. Catalyzes the anti-1,4-elimination of the C-3 phosphate and the C-6 proR hydrogen from 5-enolpyruvylshikimate-3-phosphate (EPSP) to yield chorismate, which is the branch point compound that serves as the starting substrate for the three terminal pathways of aromatic amino acid biosynthesis. This reaction introduces a second double bond into the aromatic ring system. This chain is Chorismate synthase, found in Enterococcus faecalis (strain ATCC 700802 / V583).